Consider the following 233-residue polypeptide: Large ribosomal subunit protein bL19c (233 aa).

A chloroplast-targeting transit peptide spans 1–77; that stretch reads MASKVLPQAL…FPARNSFVVR (77 aa).

Component of the chloroplast large ribosomal subunit (LSU). Mature 70S chloroplast ribosomes of higher plants consist of a small (30S) and a large (50S) subunit. The 30S small subunit contains 1 molecule of ribosomal RNA (16S rRNA) and 24 different proteins. The 50S large subunit contains 3 rRNA molecules (23S, 5S and 4.5S rRNA) and 33 different proteins.

The protein localises to the plastid. The protein resides in the chloroplast. In terms of biological role, component of the chloroplast ribosome (chloro-ribosome), a dedicated translation machinery responsible for the synthesis of chloroplast genome-encoded proteins, including proteins of the transcription and translation machinery and components of the photosynthetic apparatus. The protein is Large ribosomal subunit protein bL19c (RPL19) of Spinacia oleracea (Spinach).